A 373-amino-acid polypeptide reads, in one-letter code: Maltose/maltodextrin import ATP-binding protein MalK (373 aa).

Residues 4-234 (VTLKNVCKAY…PQNRFVAGFI (231 aa)) form the ABC transporter domain. An ATP-binding site is contributed by 36-43 (GPSGCGKS).

It belongs to the ABC transporter superfamily. Maltooligosaccharide importer (TC 3.A.1.1.1) family. In terms of assembly, the complex is composed of two ATP-binding proteins (MalK), two transmembrane proteins (MalG and MalK) and a solute-binding protein (MalE).

It is found in the cell inner membrane. It catalyses the reaction D-maltose(out) + ATP + H2O = D-maltose(in) + ADP + phosphate + H(+). Its function is as follows. Part of the ABC transporter complex MalEFGK involved in maltose/maltodextrin import. Responsible for energy coupling to the transport system. In Vibrio cholerae serotype O1 (strain ATCC 39315 / El Tor Inaba N16961), this protein is Maltose/maltodextrin import ATP-binding protein MalK.